The following is a 271-amino-acid chain: Digeranylgeranylglyceryl phosphate synthase (271 aa).

Helical transmembrane passes span 11–31 (INCAMAALGVVVGELIAGARL), 33–53 (VGAVLAPVVAAVVCAGGNAIN), 88–108 (FAVGVGMATVINRMCLAIAAL), 125–145 (LIGNVMVSYLVGSCFLFGAAV), 149–169 (PAPAVWLFLLAFLANLVREIL), 201–221 (VFAIALAVLTPLPYLDGVVGW), 224–244 (LVLALPAAAVILLASVLAVAG), and 251–271 (AQRVVKVGMLLGLLAFLASLL).

This sequence belongs to the UbiA prenyltransferase family. DGGGP synthase subfamily. Mg(2+) serves as cofactor.

It localises to the cell membrane. It catalyses the reaction sn-3-O-(geranylgeranyl)glycerol 1-phosphate + (2E,6E,10E)-geranylgeranyl diphosphate = 2,3-bis-O-(geranylgeranyl)-sn-glycerol 1-phosphate + diphosphate. Its pathway is membrane lipid metabolism; glycerophospholipid metabolism. In terms of biological role, prenyltransferase that catalyzes the transfer of the geranylgeranyl moiety of geranylgeranyl diphosphate (GGPP) to the C2 hydroxyl of (S)-3-O-geranylgeranylglyceryl phosphate (GGGP). This reaction is the second ether-bond-formation step in the biosynthesis of archaeal membrane lipids. The polypeptide is Digeranylgeranylglyceryl phosphate synthase (Methanopyrus kandleri (strain AV19 / DSM 6324 / JCM 9639 / NBRC 100938)).